Reading from the N-terminus, the 146-residue chain is Large ribosomal subunit protein uL15 (146 aa).

Residues 1–46 (MAIELHDLKPAPGAHKAKTRVGRGEGSKGKTAGRGTKGTGARKNVP) form a disordered region. A compositionally biased stretch (low complexity) spans 29 to 43 (GKTAGRGTKGTGARK).

Belongs to the universal ribosomal protein uL15 family. Part of the 50S ribosomal subunit.

In terms of biological role, binds to the 23S rRNA. The polypeptide is Large ribosomal subunit protein uL15 (Cutibacterium acnes (strain DSM 16379 / KPA171202) (Propionibacterium acnes)).